The chain runs to 124 residues: MKNVLIIFGKPYCSICENVSEAVEELKSEYDILHVDILSFFLKDGASSMLGDVKRGTLIGNFAAHLSNYIVSIFKYNPQTKQMAFVDINKSLDFTKTDKSLVNLEILKSEIEKATYGVWPPVTE.

The cysteines at positions 13 and 16 are disulfide-linked.

It belongs to the glutaredoxin family. Homodimer.

It localises to the host cytoplasm. Its function is as follows. Glutaredoxin necessary for virion morphogenesis and virus replication. Functions as a thiol-disulfide transfer protein between membrane-associated OPG128 and substrates OPG095 or OPG053. The complete pathway for formation of disulfide bonds in intracellular virion membrane proteins sequentially involves oxidation of OPG072, OPG128 and OPG088. Exhibit thioltransferase and dehydroascorbate reductase activities in vitro. The sequence is that of Glutaredoxin-2 (OPG088) from Bos taurus (Bovine).